The primary structure comprises 280 residues: Cobalt import ATP-binding protein CbiO (280 aa).

The ABC transporter domain maps to 2 to 236 (IEVRDLRFHY…GDWLRQQGLG (235 aa)). ATP is bound at residue 36-43 (GANGCGKT).

This sequence belongs to the ABC transporter superfamily. Cobalt importer (TC 3.A.1.18.1) family. As to quaternary structure, forms an energy-coupling factor (ECF) transporter complex composed of an ATP-binding protein (A component, CbiO), a transmembrane protein (T component, CbiQ) and 2 possible substrate-capture proteins (S components, CbiM and CbiN) of unknown stoichimetry.

The protein resides in the cell inner membrane. It functions in the pathway cofactor biosynthesis; adenosylcobalamin biosynthesis. Its function is as follows. Part of the energy-coupling factor (ECF) transporter complex CbiMNOQ involved in cobalt import. Presumably responsible for energy coupling to the transport system. The protein is Cobalt import ATP-binding protein CbiO of Syntrophus aciditrophicus (strain SB).